A 155-amino-acid polypeptide reads, in one-letter code: uncharacterized protein (155 aa).

This is an uncharacterized protein from Agrobacterium vitis (Rhizobium vitis).